The chain runs to 153 residues: Pheromone-binding protein Gp-9 (153 aa).

Residues 1–19 (MKTFVLHIFIFAFVAFASA) form the signal peptide. 3 disulfides stabilise this stretch: cysteine 37/cysteine 77, cysteine 73/cysteine 129, and cysteine 118/cysteine 138.

Belongs to the PBP/GOBP family. In terms of assembly, homodimer.

Its subcellular location is the secreted. Colony queen number, a major feature of social organization, is associated with worker genotype for Gp-9. Colonies are headed by either a single reproductive queen (monogyne form) or multiple queens (polygyne form). Differences in worker Gp-9 genotypes between social forms may cause differences in workers' abilities to recognize queens and regulate their numbers. In Solenopsis amblychila (Desert fire ant), this protein is Pheromone-binding protein Gp-9.